The primary structure comprises 93 residues: Aspartyl/glutamyl-tRNA(Asn/Gln) amidotransferase subunit C (93 aa).

Belongs to the GatC family. Heterotrimer of A, B and C subunits.

The catalysed reaction is L-glutamyl-tRNA(Gln) + L-glutamine + ATP + H2O = L-glutaminyl-tRNA(Gln) + L-glutamate + ADP + phosphate + H(+). It carries out the reaction L-aspartyl-tRNA(Asn) + L-glutamine + ATP + H2O = L-asparaginyl-tRNA(Asn) + L-glutamate + ADP + phosphate + 2 H(+). Allows the formation of correctly charged Asn-tRNA(Asn) or Gln-tRNA(Gln) through the transamidation of misacylated Asp-tRNA(Asn) or Glu-tRNA(Gln) in organisms which lack either or both of asparaginyl-tRNA or glutaminyl-tRNA synthetases. The reaction takes place in the presence of glutamine and ATP through an activated phospho-Asp-tRNA(Asn) or phospho-Glu-tRNA(Gln). The polypeptide is Aspartyl/glutamyl-tRNA(Asn/Gln) amidotransferase subunit C (Nautilia profundicola (strain ATCC BAA-1463 / DSM 18972 / AmH)).